The primary structure comprises 98 residues: MTMVYANIFLAFIMSLMGLLMYRSHLMSSLLCLEGMMLSLFVMMTVTILNNHFTLASMTPIILLVFAACEAALGLSLLVMVSNTYGTDYVQNLNLLQC.

The next 3 membrane-spanning stretches (helical) occupy residues 1–21 (MTMV…GLLM), 29–49 (SLLC…VTIL), and 61–81 (IILL…LVMV).

It belongs to the complex I subunit 4L family. Core subunit of respiratory chain NADH dehydrogenase (Complex I) which is composed of 45 different subunits.

It localises to the mitochondrion inner membrane. It catalyses the reaction a ubiquinone + NADH + 5 H(+)(in) = a ubiquinol + NAD(+) + 4 H(+)(out). In terms of biological role, core subunit of the mitochondrial membrane respiratory chain NADH dehydrogenase (Complex I) which catalyzes electron transfer from NADH through the respiratory chain, using ubiquinone as an electron acceptor. Part of the enzyme membrane arm which is embedded in the lipid bilayer and involved in proton translocation. The chain is NADH-ubiquinone oxidoreductase chain 4L (MT-ND4L) from Mirounga angustirostris (Northern elephant seal).